Reading from the N-terminus, the 354-residue chain is Dual-specificity RNA methyltransferase RlmN (354 aa).

Glutamate 86 serves as the catalytic Proton acceptor. In terms of domain architecture, Radical SAM core spans 105–338; it reads RHARYTICVS…CTIRQSKGLD (234 aa). A disulfide bridge connects residues cysteine 112 and cysteine 343. [4Fe-4S] cluster-binding residues include cysteine 119, cysteine 123, and cysteine 126. Residues 169–170, serine 201, 224–226, and asparagine 300 contribute to the S-adenosyl-L-methionine site; these read GE and SLH. Cysteine 343 functions as the S-methylcysteine intermediate in the catalytic mechanism.

It belongs to the radical SAM superfamily. RlmN family. It depends on [4Fe-4S] cluster as a cofactor.

Its subcellular location is the cytoplasm. It carries out the reaction adenosine(2503) in 23S rRNA + 2 reduced [2Fe-2S]-[ferredoxin] + 2 S-adenosyl-L-methionine = 2-methyladenosine(2503) in 23S rRNA + 5'-deoxyadenosine + L-methionine + 2 oxidized [2Fe-2S]-[ferredoxin] + S-adenosyl-L-homocysteine. The catalysed reaction is adenosine(37) in tRNA + 2 reduced [2Fe-2S]-[ferredoxin] + 2 S-adenosyl-L-methionine = 2-methyladenosine(37) in tRNA + 5'-deoxyadenosine + L-methionine + 2 oxidized [2Fe-2S]-[ferredoxin] + S-adenosyl-L-homocysteine. Functionally, specifically methylates position 2 of adenine 2503 in 23S rRNA and position 2 of adenine 37 in tRNAs. m2A2503 modification seems to play a crucial role in the proofreading step occurring at the peptidyl transferase center and thus would serve to optimize ribosomal fidelity. The chain is Dual-specificity RNA methyltransferase RlmN from Campylobacter fetus subsp. fetus (strain 82-40).